Here is a 101-residue protein sequence, read N- to C-terminus: uncharacterized protein (101 aa).

An N-terminal signal peptide occupies residues 1–21 (MKLSTCCAALLLALASPAVLA). Residues 79–94 (RTTSGNVSAPAQSSQD) show a composition bias toward polar residues. Positions 79-101 (RTTSGNVSAPAQSSQDGAPAEPQ) are disordered.

This is an uncharacterized protein from Escherichia coli (strain K12).